A 498-amino-acid chain; its full sequence is MTTKKLYFLSISIIIIVAISIAIYITLNSNTKTRLTNDSQQQIDTIIEHDLQKGHIPGASILIVKNGKVFLNKGYGYQDVDKKVKASPTTKYEIASNTKAFTGLAILKLAQEGRLNLNDAVSKHVPHFKMNYNGQNETITIKQLLAQTSGIPSDITSEDSVTSKNNRLNDVTRAIMGDELHHKPGEEFEYSNMNYDLLGLIIQNVTKQSYTKYITNSWLKPLHMTHTSFKQTNYKSKHDAIGYELQGSTPVVSKPEFNLWDTPSAYMMTSTEDLEHWIKFQLNPPDKYKSLVQQSHKNLSSTIGEPNANAYASGWFTNNDEHLVFHSGTLDNFSSFILLNPKQNYGIVVLANLNSEYVPKLVEHLNTQIVNHKRYSTVASMLNQYKDQFNIVTVLMTTLILLAFIFSAYRAWQMRHGQILLRRSKRIAVLSWLSLCICIALALILYALPYLILGSNNWSFVLTWLPIEIKLALITTLIALFSTLIVILLFLHTKITKT.

The next 4 membrane-spanning stretches (helical) occupy residues 6 to 26, 389 to 409, 433 to 453, and 471 to 491; these read LYFL…IYIT, FNIV…FSAY, LSLC…YLIL, and LALI…LLFL.

It localises to the cell membrane. Functionally, its precise function is unknown. Has no penicillin-binding activity and is not involved in methicillin resistance. This chain is Protein flp (flp), found in Staphylococcus aureus (strain COL).